We begin with the raw amino-acid sequence, 200 residues long: Ribonuclease T2 (200 aa).

An intrachain disulfide couples Cys-17 to Cys-22. His-32 is a catalytic residue. Cys-42 and Cys-89 form a disulfide bridge. Residues Asn-43 and Asn-73 are each glycosylated (N-linked (GlcNAc...) asparagine). Active-site residues include Glu-82 and His-86. An N-linked (GlcNAc...) asparagine glycan is attached at Asn-116. 2 disulfides stabilise this stretch: Cys-152-Cys-188 and Cys-170-Cys-180.

The protein belongs to the RNase T2 family.

It localises to the secreted. It is found in the lysosome lumen. Its subcellular location is the endoplasmic reticulum lumen. The protein localises to the mitochondrion intermembrane space. It carries out the reaction a ribonucleotidyl-ribonucleotide-RNA + H2O = a 3'-end 3'-phospho-ribonucleotide-RNA + a 5'-end dephospho-ribonucleoside-RNA + H(+). The catalysed reaction is an adenylyl-uridine-RNA = a 3'-end 2',3'-cyclophospho-AMP-RNA + a 5'-end dephospho-uridine-RNA. The enzyme catalyses a guanylyl-uridine-RNA = a 3'-end 2',3'-cyclophospho-GMP-RNA + a 5'-end dephospho-uridine-RNA. Its activity is regulated as follows. Inhibited by Zn(2+) and Cu(2+). Functionally, ribonuclease that plays an essential role in innate immune response by recognizing and degrading RNAs from microbial pathogens that are subsequently sensed by TLR8. Cleaves preferentially single-stranded RNA molecules between purine and uridine residues, which critically contributes to the supply of catabolic uridine and the generation of purine-2',3'-cyclophosphate-terminated oligoribonucleotides. In turn, RNase T2 degradation products promote the RNA-dependent activation of TLR8. In plasmacytoid dendritic cells, it cooperates with PLD3 or PLD4 5'-&gt;3' exonucleases to process RNA fragments and release 2',3'-cyclic guanosine monophosphate (2',3'-cGMP), a potent stimulatory ligand for TLR7. Also plays a key role in degradation of mitochondrial RNA and processing of non-coding RNA imported from the cytosol into mitochondria. Participates as well in degradation of mitochondrion-associated cytosolic rRNAs. This Sus scrofa (Pig) protein is Ribonuclease T2 (RNASET2).